The following is a 507-amino-acid chain: Aldehyde dehydrogenase 1, mitochondrial (507 aa).

The transit peptide at methionine 1 to leucine 21 directs the protein to the mitochondrion. Glycine 266–glycine 271 lines the NAD(+) pocket. Catalysis depends on residues glutamate 289 and cysteine 323.

The protein belongs to the aldehyde dehydrogenase family. In terms of assembly, homotetramer.

Its subcellular location is the mitochondrion matrix. It carries out the reaction an aldehyde + NAD(+) + H2O = a carboxylate + NADH + 2 H(+). It functions in the pathway alcohol metabolism; ethanol degradation; acetate from ethanol: step 2/2. This Saccharomyces cerevisiae (Baker's yeast) protein is Aldehyde dehydrogenase 1, mitochondrial (ALD1).